We begin with the raw amino-acid sequence, 543 residues long: CTP synthase (543 aa).

Residues 1 to 265 (MTRYIFVTGG…DDFVVERFGL (265 aa)) are amidoligase domain. Ser13 provides a ligand contact to CTP. Ser13 provides a ligand contact to UTP. Residues 14–19 (SLGKGI) and Asp71 contribute to the ATP site. Mg(2+)-binding residues include Asp71 and Glu139. CTP is bound by residues 146–148 (DIE), 186–191 (KTKPTQ), and Lys222. UTP is bound by residues 186–191 (KTKPTQ) and Lys222. One can recognise a Glutamine amidotransferase type-1 domain in the interval 290 to 541 (TIAMVGKYME…VKAALAQHQK (252 aa)). L-glutamine is bound at residue Gly351. The Nucleophile; for glutamine hydrolysis role is filled by Cys378. L-glutamine-binding positions include 379-382 (LGMQ), Glu402, and Arg469. Active-site residues include His514 and Glu516.

Belongs to the CTP synthase family. Homotetramer.

It catalyses the reaction UTP + L-glutamine + ATP + H2O = CTP + L-glutamate + ADP + phosphate + 2 H(+). The enzyme catalyses L-glutamine + H2O = L-glutamate + NH4(+). It carries out the reaction UTP + NH4(+) + ATP = CTP + ADP + phosphate + 2 H(+). Its pathway is pyrimidine metabolism; CTP biosynthesis via de novo pathway; CTP from UDP: step 2/2. With respect to regulation, allosterically activated by GTP, when glutamine is the substrate; GTP has no effect on the reaction when ammonia is the substrate. The allosteric effector GTP functions by stabilizing the protein conformation that binds the tetrahedral intermediate(s) formed during glutamine hydrolysis. Inhibited by the product CTP, via allosteric rather than competitive inhibition. In terms of biological role, catalyzes the ATP-dependent amination of UTP to CTP with either L-glutamine or ammonia as the source of nitrogen. Regulates intracellular CTP levels through interactions with the four ribonucleotide triphosphates. In Pseudomonas savastanoi pv. phaseolicola (strain 1448A / Race 6) (Pseudomonas syringae pv. phaseolicola (strain 1448A / Race 6)), this protein is CTP synthase.